The primary structure comprises 228 residues: PKHD-type hydroxylase xcc-b100_1388 (228 aa).

Residues 78-180 form the Fe2OG dioxygenase domain; it reads RIYPPLFNRY…RVASFFWIQS (103 aa). The Fe cation site is built by His96, Asp98, and His161. Residue Arg171 coordinates 2-oxoglutarate.

Fe(2+) serves as cofactor. It depends on L-ascorbate as a cofactor.

The polypeptide is PKHD-type hydroxylase xcc-b100_1388 (Xanthomonas campestris pv. campestris (strain B100)).